Consider the following 191-residue polypeptide: MANVSIHPAVDGGVVHGSTEGFAGGTLQCLCASDKVTVDVASQSAHNHACGCSKCWKPEGAKFSVVAVAPRDKVTVTAHPEKLKIVDESATIQRHACTGCGVHLYGRIENKDHAFYGLDFIHTELSQQSGWSPPGFAAFVSSIIETGTPPDQMDGVRARLTELGLTPYDCLSPALMDALSTNVARHKGLLH.

Positions 22–169 (FAGGTLQCLC…LTELGLTPYD (148 aa)) constitute a CENP-V/GFA domain. Cysteine 29, cysteine 31, cysteine 50, cysteine 52, cysteine 55, cysteine 97, and cysteine 100 together coordinate Zn(2+).

It belongs to the Gfa family. The cofactor is Zn(2+).

It catalyses the reaction S-(hydroxymethyl)glutathione = glutathione + formaldehyde. It functions in the pathway one-carbon metabolism; formaldehyde degradation; formate from formaldehyde (glutathione route): step 1/3. Catalyzes the condensation of formaldehyde and glutathione to S-hydroxymethylglutathione. The protein is Glutathione-dependent formaldehyde-activating enzyme of Xanthomonas campestris pv. campestris (strain B100).